The chain runs to 487 residues: Protein nucleotidyltransferase YdiU (487 aa).

Residues Gly90, Gly92, Arg93, Lys113, Asp125, Gly126, Arg176, and Arg183 each contribute to the ATP site. Catalysis depends on Asp252, which acts as the Proton acceptor. Residues Asn253 and Asp262 each contribute to the Mg(2+) site. Asp262 is an ATP binding site.

Belongs to the SELO family. Mg(2+) serves as cofactor. Requires Mn(2+) as cofactor.

The enzyme catalyses L-seryl-[protein] + ATP = 3-O-(5'-adenylyl)-L-seryl-[protein] + diphosphate. The catalysed reaction is L-threonyl-[protein] + ATP = 3-O-(5'-adenylyl)-L-threonyl-[protein] + diphosphate. It carries out the reaction L-tyrosyl-[protein] + ATP = O-(5'-adenylyl)-L-tyrosyl-[protein] + diphosphate. It catalyses the reaction L-histidyl-[protein] + UTP = N(tele)-(5'-uridylyl)-L-histidyl-[protein] + diphosphate. The enzyme catalyses L-seryl-[protein] + UTP = O-(5'-uridylyl)-L-seryl-[protein] + diphosphate. The catalysed reaction is L-tyrosyl-[protein] + UTP = O-(5'-uridylyl)-L-tyrosyl-[protein] + diphosphate. Its function is as follows. Nucleotidyltransferase involved in the post-translational modification of proteins. It can catalyze the addition of adenosine monophosphate (AMP) or uridine monophosphate (UMP) to a protein, resulting in modifications known as AMPylation and UMPylation. The protein is Protein nucleotidyltransferase YdiU of Pseudomonas syringae pv. syringae (strain B728a).